The following is a 105-amino-acid chain: Large ribosomal subunit protein uL18c (105 aa).

This sequence belongs to the universal ribosomal protein uL18 family. In terms of assembly, part of the 50S ribosomal subunit; contacts the 5S rRNA.

It is found in the plastid. Its subcellular location is the chloroplast. Binds 5S rRNA, forms part of the central protuberance of the 50S subunit. In Cyanidium caldarium (Red alga), this protein is Large ribosomal subunit protein uL18c (rpl18).